Consider the following 76-residue polypeptide: Acyl carrier protein (76 aa).

Positions 1–76 (MSIEERVKKI…SAIDYVQNNQ (76 aa)) constitute a Carrier domain. Residue S36 is modified to O-(pantetheine 4'-phosphoryl)serine.

Belongs to the acyl carrier protein (ACP) family. In terms of processing, 4'-phosphopantetheine is transferred from CoA to a specific serine of apo-ACP by AcpS. This modification is essential for activity because fatty acids are bound in thioester linkage to the sulfhydryl of the prosthetic group.

Its subcellular location is the cytoplasm. The protein operates within lipid metabolism; fatty acid biosynthesis. Its function is as follows. Carrier of the growing fatty acid chain in fatty acid biosynthesis. In Histophilus somni (strain 129Pt) (Haemophilus somnus), this protein is Acyl carrier protein.